The sequence spans 344 residues: Geranylgeranyl transferase type-2 subunit alpha (344 aa).

6 PFTA repeats span residues 44–78 (YSEG…NDVF), 89–123 (LLDN…NAPY), 125–159 (NWNY…QIER), 165–199 (LAKK…TILN), 214–248 (ILEQ…HCNP), and 266–293 (YLQK…SLVN).

The protein belongs to the protein prenyltransferase subunit alpha family. Heterodimer of an alpha and a beta subunit.

The catalysed reaction is geranylgeranyl diphosphate + L-cysteinyl-[protein] = S-geranylgeranyl-L-cysteinyl-[protein] + diphosphate. Functionally, catalyzes the transfer of a geranyl-geranyl moiety from geranyl-geranyl pyrophosphate to proteins having the C-terminal-XCC or -XCXC, where both cysteines may become modified. This chain is Geranylgeranyl transferase type-2 subunit alpha (bet4), found in Schizosaccharomyces pombe (strain 972 / ATCC 24843) (Fission yeast).